The following is a 635-amino-acid chain: Threonine--tRNA ligase (635 aa).

A TGS domain is found at 1–61; it reads MVSIRLPDGS…DRDASLAIVT (61 aa). Residues 242–533 are catalytic; it reads DHRKLGKQLD…LIEHHAGAMP (292 aa). Zn(2+) contacts are provided by cysteine 333, histidine 384, and histidine 510.

Belongs to the class-II aminoacyl-tRNA synthetase family. In terms of assembly, homodimer. It depends on Zn(2+) as a cofactor.

Its subcellular location is the cytoplasm. The catalysed reaction is tRNA(Thr) + L-threonine + ATP = L-threonyl-tRNA(Thr) + AMP + diphosphate + H(+). Catalyzes the attachment of threonine to tRNA(Thr) in a two-step reaction: L-threonine is first activated by ATP to form Thr-AMP and then transferred to the acceptor end of tRNA(Thr). Also edits incorrectly charged L-seryl-tRNA(Thr). The polypeptide is Threonine--tRNA ligase (Burkholderia pseudomallei (strain 1106a)).